Here is a 258-residue protein sequence, read N- to C-terminus: Deoxyribose-phosphate aldolase (258 aa).

Catalysis depends on Asp-101, which acts as the Proton donor/acceptor. Catalysis depends on Lys-166, which acts as the Schiff-base intermediate with acetaldehyde. The active-site Proton donor/acceptor is the Lys-200.

The protein belongs to the DeoC/FbaB aldolase family. DeoC type 2 subfamily.

Its subcellular location is the cytoplasm. The catalysed reaction is 2-deoxy-D-ribose 5-phosphate = D-glyceraldehyde 3-phosphate + acetaldehyde. Its pathway is carbohydrate degradation; 2-deoxy-D-ribose 1-phosphate degradation; D-glyceraldehyde 3-phosphate and acetaldehyde from 2-deoxy-alpha-D-ribose 1-phosphate: step 2/2. Catalyzes a reversible aldol reaction between acetaldehyde and D-glyceraldehyde 3-phosphate to generate 2-deoxy-D-ribose 5-phosphate. This is Deoxyribose-phosphate aldolase from Actinobacillus pleuropneumoniae serotype 3 (strain JL03).